Reading from the N-terminus, the 552-residue chain is Phosphoglucomutase (552 aa).

Ser143 acts as the Phosphoserine intermediate in catalysis. Positions 143, 295, 297, and 299 each coordinate Mg(2+).

This sequence belongs to the phosphohexose mutase family. The cofactor is Mg(2+).

The enzyme catalyses alpha-D-glucose 1-phosphate = alpha-D-glucose 6-phosphate. It participates in glycolipid metabolism; diglucosyl-diacylglycerol biosynthesis. In terms of biological role, catalyzes the interconversion between glucose-6-phosphate and alpha-glucose-1-phosphate. This is the first step in the biosynthesis of diglucosyl-diacylglycerol (Glc2-DAG), i.e. the predominant glycolipid found in the S.aureus membrane, which is also used as a membrane anchor for lipoteichoic acid (LTA). The sequence is that of Phosphoglucomutase (pgcA) from Staphylococcus aureus (strain MRSA252).